Consider the following 412-residue polypeptide: 43 kDa receptor-associated protein of the synapse (412 aa).

A lipid anchor (N-myristoyl glycine) is attached at glycine 2. 7 TPR repeats span residues 6 to 39 (TKQQIEKGLQLYQANETGKALEIWQQVVERSTEL), 83 to 116 (TEAYLNLARGHEKLCEFSEAVAYCRTCLGAEGGP), 123 to 156 (GQVCLSMGNAFLGLSAFQKALECFEKALRYAHGN), 163 to 196 (CRVCCSLGAFYVQLKDYEKALFFPCKSAELVADY), 206 to 239 (AMSRYHMAAAYRKLGRMDDAMECCEESMKIALQH), 246 to 279 (ALCLLCFADIHRHRSDIGKALPRYESSLNIMTEI), and 286 to 319 (AHVLLNIAKCWMTEKKLDKTLGVVQKAEELADAV). Tyrosine 196 bears the Phosphotyrosine mark. Residues 363-403 (CGLCGESIGDQNSQLQALPCSHLFHLKCLQTNGNRGCPNCK) form an RING-type zinc finger. Serine 405 is subject to Phosphoserine.

It belongs to the RAPsyn family.

Its subcellular location is the cell membrane. It is found in the postsynaptic cell membrane. The protein resides in the cytoplasm. The protein localises to the cytoskeleton. Its function is as follows. Postsynaptic protein required for clustering of nicotinic acetylcholine receptors (nAChRs) at the neuromuscular junction. It may link the receptor to the underlying postsynaptic cytoskeleton, possibly by direct association with actin or spectrin. This chain is 43 kDa receptor-associated protein of the synapse (RAPSN), found in Tetronarce californica (Pacific electric ray).